The following is a 66-amino-acid chain: Cysteine proteinase inhibitor (66 aa).

Positions 18–22 (QVVAG) match the Secondary area of contact motif.

The protein belongs to the cystatin family. Phytocystatin subfamily. In tubers of untreated plants. After ABA treatment or mechanical wounding is mostly accumulated in leaves, to a lesser extent in stems, but not in roots.

This is Cysteine proteinase inhibitor (CYS-PIN) from Solanum tuberosum (Potato).